A 956-amino-acid polypeptide reads, in one-letter code: Translation initiation factor IF-2 (956 aa).

3 disordered regions span residues 53–102 (QFAG…QQEI), 116–315 (GKID…NRPA), and 334–371 (TLEK…ALDE). Residues 58–102 (KGNKEASKEVGEEKRKEKEALRVEREKEIEDKRRQEEERQKQQEI) show a composition bias toward basic and acidic residues. A compositionally biased stretch (polar residues) spans 142 to 158 (VTPTQTEKPVQKETVQS). Residues 166-186 (SEEKKVEKPIITEKKEVKAES) are compositionally biased toward basic and acidic residues. Positions 197–208 (TDPTTAEETITT) are enriched in low complexity. The span at 209–229 (QYQKLSGTTLTGQTIDLSQFN) shows a compositional bias: polar residues. A compositionally biased stretch (low complexity) spans 240 to 257 (ITPNKPGTPGVGNNNNAN). Residues 343–352 (GKSKAAKYRR) show a composition bias toward basic residues. A compositionally biased stretch (basic and acidic residues) spans 353–371 (DKRETHRQKSDDEQRALDE). The tr-type G domain maps to 454–622 (TRAPIVTVMG…KVLLEAEILD (169 aa)). Residues 463-470 (GHVDHGKT) are G1. Residue 463 to 470 (GHVDHGKT) coordinates GTP. The segment at 488–492 (GITQH) is G2. The tract at residues 510–513 (DTPG) is G3. GTP contacts are provided by residues 510–514 (DTPGH) and 564–567 (NKVD). The segment at 564-567 (NKVD) is G4. The G5 stretch occupies residues 600–602 (SAK).

It belongs to the TRAFAC class translation factor GTPase superfamily. Classic translation factor GTPase family. IF-2 subfamily.

It is found in the cytoplasm. Its function is as follows. One of the essential components for the initiation of protein synthesis. Protects formylmethionyl-tRNA from spontaneous hydrolysis and promotes its binding to the 30S ribosomal subunits. Also involved in the hydrolysis of GTP during the formation of the 70S ribosomal complex. This Flavobacterium johnsoniae (strain ATCC 17061 / DSM 2064 / JCM 8514 / BCRC 14874 / CCUG 350202 / NBRC 14942 / NCIMB 11054 / UW101) (Cytophaga johnsonae) protein is Translation initiation factor IF-2.